A 372-amino-acid chain; its full sequence is Cytochrome b (372 aa).

A run of 4 helical transmembrane segments spans residues 25 to 45 (FGSM…FLAI), 69 to 90 (WIMQ…YTHI), 105 to 125 (WLSG…GYVL), and 170 to 190 (FFAL…IHIM). 2 residues coordinate heme b: H75 and H89. 2 residues coordinate heme b: H174 and H188. Position 193 (H193) interacts with a ubiquinone. 4 consecutive transmembrane segments (helical) span residues 218–238 (YKDM…MSFM), 280–300 (LGGT…PFTH), 312–332 (ITQV…WTAT), and 339–358 (FILI…IIHP).

It belongs to the cytochrome b family. In terms of assembly, the cytochrome bc1 complex contains 3 respiratory subunits (MT-CYB, CYC1 and UQCRFS1), 2 core proteins (UQCRC1 and UQCRC2) and probably 6 low-molecular weight proteins. Heme b is required as a cofactor.

It is found in the mitochondrion inner membrane. Its function is as follows. Component of the ubiquinol-cytochrome c reductase complex (complex III or cytochrome b-c1 complex) that is part of the mitochondrial respiratory chain. The b-c1 complex mediates electron transfer from ubiquinol to cytochrome c. Contributes to the generation of a proton gradient across the mitochondrial membrane that is then used for ATP synthesis. The sequence is that of Cytochrome b (MT-CYB) from Pseudechis australis (Mulga snake).